Reading from the N-terminus, the 480-residue chain is Cysteine--tRNA ligase (480 aa).

Cysteine 29 provides a ligand contact to Zn(2+). The 'HIGH' region motif lies at 31–41 (PTVYGHAHLGH). The Zn(2+) site is built by cysteine 221, histidine 246, and glutamate 250. The short motif at 278–282 (KMGKS) is the 'KMSKS' region element. Residue lysine 281 participates in ATP binding.

Belongs to the class-I aminoacyl-tRNA synthetase family. In terms of assembly, monomer. It depends on Zn(2+) as a cofactor.

Its subcellular location is the cytoplasm. The catalysed reaction is tRNA(Cys) + L-cysteine + ATP = L-cysteinyl-tRNA(Cys) + AMP + diphosphate. The chain is Cysteine--tRNA ligase from Chlorobium chlorochromatii (strain CaD3).